Reading from the N-terminus, the 342-residue chain is tRNA N6-adenosine threonylcarbamoyltransferase (342 aa).

The Fe cation site is built by His111 and His115. Residues 134-138 (LVSGG), Asp167, Gly180, and Asn277 contribute to the substrate site. Residue Asp305 participates in Fe cation binding.

The protein belongs to the KAE1 / TsaD family. Fe(2+) serves as cofactor.

It localises to the cytoplasm. It catalyses the reaction L-threonylcarbamoyladenylate + adenosine(37) in tRNA = N(6)-L-threonylcarbamoyladenosine(37) in tRNA + AMP + H(+). Functionally, required for the formation of a threonylcarbamoyl group on adenosine at position 37 (t(6)A37) in tRNAs that read codons beginning with adenine. Is involved in the transfer of the threonylcarbamoyl moiety of threonylcarbamoyl-AMP (TC-AMP) to the N6 group of A37, together with TsaE and TsaB. TsaD likely plays a direct catalytic role in this reaction. The protein is tRNA N6-adenosine threonylcarbamoyltransferase of Histophilus somni (strain 2336) (Haemophilus somnus).